Here is a 325-residue protein sequence, read N- to C-terminus: Delta(1)-pyrroline-2-carboxylate reductase (325 aa).

Belongs to the ornithine cyclodeaminase/mu-crystallin family.

The catalysed reaction is L-proline + NAD(+) = 1-pyrroline-2-carboxylate + NADH + H(+). It carries out the reaction L-proline + NADP(+) = 1-pyrroline-2-carboxylate + NADPH + H(+). Functionally, catalyzes the reduction of Delta(1)-pyrroline-2-carboxylate (Pyr2C) to L-proline, using preferentially NADPH over NADH as the electron donor. May be involved in a degradation pathway that converts trans-3-hydroxy-L-proline (t3LHyp) to L-proline. The chain is Delta(1)-pyrroline-2-carboxylate reductase from Bacillus cereus (strain ZK / E33L).